The chain runs to 461 residues: Fumarate hydratase class II (461 aa).

Substrate is bound by residues 97 to 99 (SGT), 127 to 130 (HPND), 137 to 139 (SSN), and T185. The active-site Proton donor/acceptor is the H186. S316 is a catalytic residue. Substrate-binding positions include S317 and 322–324 (KVN).

It belongs to the class-II fumarase/aspartase family. Fumarase subfamily. Homotetramer.

It localises to the cytoplasm. It catalyses the reaction (S)-malate = fumarate + H2O. It participates in carbohydrate metabolism; tricarboxylic acid cycle; (S)-malate from fumarate: step 1/1. In terms of biological role, involved in the TCA cycle. Catalyzes the stereospecific interconversion of fumarate to L-malate. This Staphylococcus aureus (strain Mu50 / ATCC 700699) protein is Fumarate hydratase class II.